The following is a 227-amino-acid chain: NADH-quinone oxidoreductase subunit C (227 aa).

It belongs to the complex I 30 kDa subunit family. In terms of assembly, NDH-1 is composed of 14 different subunits. Subunits NuoB, C, D, E, F, and G constitute the peripheral sector of the complex.

It localises to the cell inner membrane. It catalyses the reaction a quinone + NADH + 5 H(+)(in) = a quinol + NAD(+) + 4 H(+)(out). In terms of biological role, NDH-1 shuttles electrons from NADH, via FMN and iron-sulfur (Fe-S) centers, to quinones in the respiratory chain. The immediate electron acceptor for the enzyme in this species is believed to be ubiquinone. Couples the redox reaction to proton translocation (for every two electrons transferred, four hydrogen ions are translocated across the cytoplasmic membrane), and thus conserves the redox energy in a proton gradient. The sequence is that of NADH-quinone oxidoreductase subunit C from Legionella pneumophila (strain Lens).